The following is a 398-amino-acid chain: Phosphomevalonate dehydratase large subunit (398 aa).

5 residues coordinate (R)-5-phosphomevalonate: glycine 48, valine 49, serine 50, asparagine 76, and proline 77. Cysteine 116 contacts [4Fe-4S] cluster. (R)-5-phosphomevalonate-binding residues include glutamate 136 and serine 137. [4Fe-4S] cluster-binding residues include cysteine 287 and cysteine 342. Lysine 361 lines the (R)-5-phosphomevalonate pocket.

This sequence belongs to the AcnX type II large subunit family. Heterodimer composed of a large subunit (PMDh-L) and a small subunit (PMDh-S). Requires [4Fe-4S] cluster as cofactor.

The catalysed reaction is (R)-5-phosphomevalonate = (2E)-3-methyl-5-phosphooxypent-2-enoate + H2O. It participates in isoprenoid biosynthesis; isopentenyl diphosphate biosynthesis via mevalonate pathway. Its function is as follows. Component of a hydro-lyase that catalyzes the dehydration of mevalonate 5-phosphate (MVA5P) to form trans-anhydromevalonate 5-phosphate (tAHMP). Involved in the archaeal mevalonate (MVA) pathway, which provides fundamental precursors for isoprenoid biosynthesis, such as isopentenyl diphosphate (IPP) and dimethylallyl diphosphate (DMAPP). The polypeptide is Phosphomevalonate dehydratase large subunit (Methanosarcina mazei (strain ATCC BAA-159 / DSM 3647 / Goe1 / Go1 / JCM 11833 / OCM 88) (Methanosarcina frisia)).